The primary structure comprises 153 residues: Salivary C-type lectin 1 (153 aa).

Residues 1–19 (MIFSLYLIVAISLADLTAA) form the signal peptide. One can recognise a C-type lectin domain in the interval 26 to 151 (KNRFCFPNVV…CSSTRRFVCE (126 aa)). 2 cysteine pairs are disulfide-bonded: Cys-45-Cys-150 and Cys-122-Cys-142.

Ca(2+) is required as a cofactor. Expressed in female salivary gland. Not detected or low-level expression in female midgut and fat body.

The protein localises to the secreted. Functionally, salivary protein with carbohydrate-binding activity; exibits high affinity for D-mannose. Agglutinates host erythrocytes. Probably participates in mosquito innate immune responses to prevent microorganism multiplication in sugar and blood meals. In terms of biological role, (Microbial infection) Agglutinates Staphylococcus aureus in vitro. (Microbial infection) Agglutinates Candida albicans in vitro. Its function is as follows. (Microbial infection) Does not agglutinate Escherichia coli in vitro. In Aedes albopictus (Asian tiger mosquito), this protein is Salivary C-type lectin 1.